The primary structure comprises 544 residues: CTP synthase (544 aa).

Positions 1–267 (MSKFVFVTGG…GDLLVSRLHL (267 aa)) are amidoligase domain. Residue Ser13 participates in CTP binding. Ser13 lines the UTP pocket. 14–19 (SVGKGI) is a binding site for ATP. Tyr54 contacts L-glutamine. Position 71 (Asp71) interacts with ATP. Asp71 and Glu141 together coordinate Mg(2+). Residues 148–150 (DIE), 188–193 (KTKPTQ), and Lys224 contribute to the CTP site. UTP is bound by residues 188–193 (KTKPTQ) and Lys224. Residues 299 to 534 (YVELKDAYYS…INAAKKVIRD (236 aa)) enclose the Glutamine amidotransferase type-1 domain. Residue Gly354 coordinates L-glutamine. The active-site Nucleophile; for glutamine hydrolysis is the Cys381. L-glutamine-binding positions include 382–385 (LGMQ), Glu405, and Arg462. Active-site residues include His507 and Glu509.

Belongs to the CTP synthase family. As to quaternary structure, homotetramer.

The enzyme catalyses UTP + L-glutamine + ATP + H2O = CTP + L-glutamate + ADP + phosphate + 2 H(+). It carries out the reaction L-glutamine + H2O = L-glutamate + NH4(+). The catalysed reaction is UTP + NH4(+) + ATP = CTP + ADP + phosphate + 2 H(+). It functions in the pathway pyrimidine metabolism; CTP biosynthesis via de novo pathway; CTP from UDP: step 2/2. Its activity is regulated as follows. Allosterically activated by GTP, when glutamine is the substrate; GTP has no effect on the reaction when ammonia is the substrate. The allosteric effector GTP functions by stabilizing the protein conformation that binds the tetrahedral intermediate(s) formed during glutamine hydrolysis. Inhibited by the product CTP, via allosteric rather than competitive inhibition. Functionally, catalyzes the ATP-dependent amination of UTP to CTP with either L-glutamine or ammonia as the source of nitrogen. Regulates intracellular CTP levels through interactions with the four ribonucleotide triphosphates. This chain is CTP synthase, found in Dehalococcoides mccartyi (strain ATCC BAA-2266 / KCTC 15142 / 195) (Dehalococcoides ethenogenes (strain 195)).